The chain runs to 704 residues: MNRVLSKGPKGLNGLLRACPSNSGRSFLYHSTYNVSSRTFWSASRLRSEDSPSGSQPLKPDPNDGIGNNTSSASSQHTPWYLQEEALIEEPRQISSRDQIPELPENSPAILPVLLDYIFKDLGLDELRSIDLRGLETPPPIGANSIMIIGTARSVKHLNVSADRLCRWLRSTYKLTPYADGLLGRNELKIKLRRKARRARVASRAGTTVDEKDDGITTGWICVNAGVVENSPVGEQASRKVEGFGNIVGGTRVVVQMFTEEKRAEVDLEGLWLATIERDRRQKQVSIDTKSDAPHEEVRAPTPVQNSSSDHVFGPHCRSSTILPLEQRRGLHSKCRLLGPETEHNQEDGLDDGLDDGLDMSPDSISTPTDQLAANRTCDKEVDTDSLLEHLSGLPDEQVLSELGAGQEDRDSTPFLRRFYDALSQMSTEEAAVARVKLLCTAISRHHQGYSKESLWKAFMTCNYHTYPISDELGFEIVSALLTALPPHQKGPKATGVLPEADRELALRVLEHLSLRGTDVLNMKVFHLLYEAASHPTSFSGEEVIKDVTDATKDRPTSRVAKMIESLDIQFDPEDARKLMMSMFRNGDYDGFWNLWHKLPLYGSPRTSADYEMLFRLHADLRDECRARDCVSTWVPMMSREHPPIPLRGQVVQDIMHCLLIGEPAIDRMARAGSTSNLVLIWNDCKNIALGRGRRGSVERMNVV.

The transit peptide at 1 to 47 (MNRVLSKGPKGLNGLLRACPSNSGRSFLYHSTYNVSSRTFWSASRLR) directs the protein to the mitochondrion. Disordered stretches follow at residues 47–76 (RSED…ASSQ) and 283–313 (KQVS…DHVF). Polar residues predominate over residues 66 to 76 (IGNNTSSASSQ). Residues 289–299 (TKSDAPHEEVR) show a composition bias toward basic and acidic residues.

This sequence belongs to the ATP25 family.

It is found in the mitochondrion inner membrane. Probable mitochondrial mRNA stabilization factor. In Aspergillus fumigatus (strain ATCC MYA-4609 / CBS 101355 / FGSC A1100 / Af293) (Neosartorya fumigata), this protein is ATPase synthesis protein 25, mitochondrial (atp25).